The sequence spans 307 residues: Putative F-box protein PP2-B6 (307 aa).

Residues 42-88 (HSPFDDLPEDCISNIISFTSPRDVCVSASVSKSFAHAVQCDSIWEKF) enclose the F-box domain.

This chain is Putative F-box protein PP2-B6 (PP2B6), found in Arabidopsis thaliana (Mouse-ear cress).